The sequence spans 147 residues: Hemoglobin subunit beta (147 aa).

An N-acetylvaline modification is found at Val-2. In terms of domain architecture, Globin spans 3-147 (HLTPDEKAAV…VANALAHKYH (145 aa)). Thr-13 bears the Phosphothreonine mark. Ser-45 is subject to Phosphoserine. Lys-60 is modified (N6-acetyllysine). A heme b-binding site is contributed by His-64. Lys-83 is subject to N6-acetyllysine. His-93 lines the heme b pocket. At Cys-94 the chain carries S-nitrosocysteine. The residue at position 145 (Lys-145) is an N6-acetyllysine.

This sequence belongs to the globin family. Heterotetramer of two alpha chains and two beta chains. As to expression, red blood cells.

Involved in oxygen transport from the lung to the various peripheral tissues. The polypeptide is Hemoglobin subunit beta (HBB) (Colobus polykomos (Western black-and-white colobus monkey)).